The chain runs to 210 residues: Glycerol-3-phosphate acyltransferase (210 aa).

A run of 6 helical transmembrane segments spans residues 8-28 (LILL…LLLT), 56-76 (GLAA…VLIA), 87-107 (TMAV…WLGF), 119-139 (TIWV…LLVA), 144-164 (ISSA…VLLS), and 165-185 (GRPL…LIWA).

This sequence belongs to the PlsY family. As to quaternary structure, probably interacts with PlsX.

The protein resides in the cell inner membrane. It catalyses the reaction an acyl phosphate + sn-glycerol 3-phosphate = a 1-acyl-sn-glycero-3-phosphate + phosphate. Its pathway is lipid metabolism; phospholipid metabolism. Catalyzes the transfer of an acyl group from acyl-phosphate (acyl-PO(4)) to glycerol-3-phosphate (G3P) to form lysophosphatidic acid (LPA). This enzyme utilizes acyl-phosphate as fatty acyl donor, but not acyl-CoA or acyl-ACP. The chain is Glycerol-3-phosphate acyltransferase from Gluconobacter oxydans (strain 621H) (Gluconobacter suboxydans).